A 533-amino-acid chain; its full sequence is Probable lipid II flippase MurJ (533 aa).

The next 13 helical transmembrane spans lie at 25-45 (ETLM…YAAF), 90-110 (VLFS…PLLV), 131-151 (LAAV…MSGM), 158-178 (FFAA…ALFY), 192-212 (YLSW…YIGV), 233-253 (LLLL…NLVI), 274-294 (IYQL…LPEL), 316-336 (FVLF…DDII), 350-370 (TTLV…FVLI), 389-409 (YTAI…PVLA), 412-432 (GIAL…FVTL), 449-469 (AMLL…SHRW), and 484-504 (GVLG…AFLI).

It belongs to the MurJ/MviN family.

The protein localises to the cell inner membrane. It participates in cell wall biogenesis; peptidoglycan biosynthesis. Functionally, involved in peptidoglycan biosynthesis. Transports lipid-linked peptidoglycan precursors from the inner to the outer leaflet of the cytoplasmic membrane. This Rhizobium tropici protein is Probable lipid II flippase MurJ.